Here is a 309-residue protein sequence, read N- to C-terminus: Olfactory receptor 7A40 (309 aa).

The Extracellular segment spans residues 1 to 26 (MELKNDTQISKFILLGISEDPLWQPF). N-linked (GlcNAc...) asparagine glycosylation occurs at asparagine 5. A helical membrane pass occupies residues 27–47 (LFGLFLFMYLVTLLGNLLIII). The Cytoplasmic portion of the chain corresponds to 48 to 57 (ATITDSHLHT). Residues 58 to 78 (PMYFFLSNLSFADICFTSASI) form a helical membrane-spanning segment. At 79–97 (PKMLVNIQTKNKVITYEGC) the chain is on the extracellular side. The cysteines at positions 97 and 179 are disulfide-linked. A helical membrane pass occupies residues 98–118 (ISQVFFFILFGVLDNFLLAVM). Residues 119 to 139 (AYDRYVAICHPLHYMVIMNCR) lie on the Cytoplasmic side of the membrane. The helical transmembrane segment at 140–160 (LCGFLVLGSWVTTALNSLLQS) threads the bilayer. Over 161–196 (SMALRLSFCTDLKIPHFVCELNQLVLLACNDTFPND) the chain is Extracellular. The helical transmembrane segment at 197-217 (MVMYFAAILLGGGPLAGILYS) threads the bilayer. At 218 to 244 (YSKIVSSIRAISSSQGKYKAFSTCASH) the chain is on the cytoplasmic side. The chain crosses the membrane as a helical span at residues 245–265 (LSVVSLFYSTLLGVYLSSSFT). Topologically, residues 266–269 (QNSH) are extracellular. A helical transmembrane segment spans residues 270-292 (STARASVMYSVVTPMLNPFIYSL). Residues 293–309 (RNKDLMGALRRLLRRKS) are Cytoplasmic-facing.

Belongs to the G-protein coupled receptor 1 family.

It is found in the cell membrane. Odorant receptor. The protein is Olfactory receptor 7A40 of Mus musculus (Mouse).